Consider the following 174-residue polypeptide: uncharacterized protein (174 aa).

Positions 153-174 (RSGNHSAGNVHPASPMIKVQGG) are disordered.

This is an uncharacterized protein from Sinorhizobium fredii (strain NBRC 101917 / NGR234).